A 424-amino-acid chain; its full sequence is Fasciclin-like arabinogalactan protein 1 (424 aa).

An N-terminal signal peptide occupies residues 1-24 (MAKKMSSLIIIFNILLLLTTQTHA). 2 consecutive FAS1 domains span residues 25-170 (HNVT…SRVL) and 184-323 (EMNL…DKVL). N-linked (GlcNAc...) asparagine glycosylation is found at asparagine 26, asparagine 128, asparagine 160, asparagine 186, and asparagine 240. The tract at residues 338 to 393 (APAPAPEDGDVADSPKAAKGKAKGKKKKAAPSPDNDPFGDSDSPAEGPDGEADDAT) is disordered. The segment covering 355–366 (AKGKAKGKKKKA) has biased composition (basic residues). The GPI-anchor amidated aspartate moiety is linked to residue aspartate 396. Positions 397–424 (AGAVRIIGGAKAGLVVSLLCLFASSWLL) are cleaved as a propeptide — removed in mature form.

The protein belongs to the fasciclin-like AGP family. In terms of tissue distribution, preferentially expressed in flowers.

It localises to the secreted. It is found in the extracellular space. Its subcellular location is the apoplast. The protein resides in the cell membrane. Functionally, may be a cell surface adhesion protein. This chain is Fasciclin-like arabinogalactan protein 1 (FLA1), found in Arabidopsis thaliana (Mouse-ear cress).